A 215-amino-acid chain; its full sequence is Peroxiredoxin (215 aa).

One can recognise a Thioredoxin domain in the interval 3 to 158 (PLLGDNFPEI…ILRAVKALQV (156 aa)). The Cysteine sulfenic acid (-SOH) intermediate role is filled by cysteine 45. Arginine 121 serves as a coordination point for substrate. An intrachain disulfide couples cysteine 205 to cysteine 211.

Belongs to the peroxiredoxin family. Prx6 subfamily. In terms of assembly, homodecamer. Pentamer of dimers that assemble into a ring structure.

The protein localises to the cytoplasm. The enzyme catalyses a hydroperoxide + [thioredoxin]-dithiol = an alcohol + [thioredoxin]-disulfide + H2O. Thiol-specific peroxidase that catalyzes the reduction of hydrogen peroxide and organic hydroperoxides to water and alcohols, respectively. Plays a role in cell protection against oxidative stress by detoxifying peroxides. This is Peroxiredoxin from Archaeoglobus fulgidus (strain ATCC 49558 / DSM 4304 / JCM 9628 / NBRC 100126 / VC-16).